Reading from the N-terminus, the 663-residue chain is uncharacterized protein (663 aa).

The signal sequence occupies residues 1 to 29; sequence MLDIGVIGRLKFATAFMAMSLLLVPAAEA.

It belongs to the bacterial solute-binding protein 5 family.

It is found in the periplasm. Functionally, possible binding-protein with either a transport or enzymatic activity. This is an uncharacterized protein from Sinorhizobium fredii (strain NBRC 101917 / NGR234).